The chain runs to 145 residues: Basic phospholipase A2 KPA2 (145 aa).

An N-terminal signal peptide occupies residues 1-19 (MYPAHLLVLVAVCVSLLGA). The propeptide occupies 20–27 (ANIPPQPL). 7 disulfides stabilise this stretch: Cys38–Cys97, Cys52–Cys144, Cys54–Cys70, Cys69–Cys125, Cys76–Cys118, Cys86–Cys111, and Cys104–Cys116. Ca(2+) contacts are provided by Tyr53, Gly55, and Gly57. His73 is an active-site residue. Asp74 is a Ca(2+) binding site. Asp119 is an active-site residue.

It belongs to the phospholipase A2 family. Group I subfamily. D49 sub-subfamily. Monomer. It depends on Ca(2+) as a cofactor. In terms of tissue distribution, expressed by the venom gland.

It is found in the secreted. It catalyses the reaction a 1,2-diacyl-sn-glycero-3-phosphocholine + H2O = a 1-acyl-sn-glycero-3-phosphocholine + a fatty acid + H(+). Its function is as follows. Snake venom phospholipase A2 (PLA2) that shows anticoagulant and neurotoxic activities. PLA2 catalyzes the calcium-dependent hydrolysis of the 2-acyl groups in 3-sn-phosphoglycerides. The protein is Basic phospholipase A2 KPA2 of Bungarus caeruleus (Indian krait).